The following is a 308-amino-acid chain: 1D-myo-inositol 2-acetamido-2-deoxy-alpha-D-glucopyranoside deacetylase (308 aa).

Positions 37, 40, and 171 each coordinate Zn(2+).

Belongs to the MshB deacetylase family. It depends on Zn(2+) as a cofactor.

The enzyme catalyses 1D-myo-inositol 2-acetamido-2-deoxy-alpha-D-glucopyranoside + H2O = 1D-myo-inositol 2-amino-2-deoxy-alpha-D-glucopyranoside + acetate. Catalyzes the deacetylation of 1D-myo-inositol 2-acetamido-2-deoxy-alpha-D-glucopyranoside (GlcNAc-Ins) in the mycothiol biosynthesis pathway. This Mycobacterium sp. (strain KMS) protein is 1D-myo-inositol 2-acetamido-2-deoxy-alpha-D-glucopyranoside deacetylase.